We begin with the raw amino-acid sequence, 443 residues long: Thymidine phosphorylase (443 aa).

It belongs to the thymidine/pyrimidine-nucleoside phosphorylase family. Homodimer.

The enzyme catalyses thymidine + phosphate = 2-deoxy-alpha-D-ribose 1-phosphate + thymine. Its pathway is pyrimidine metabolism; dTMP biosynthesis via salvage pathway; dTMP from thymine: step 1/2. Functionally, the enzymes which catalyze the reversible phosphorolysis of pyrimidine nucleosides are involved in the degradation of these compounds and in their utilization as carbon and energy sources, or in the rescue of pyrimidine bases for nucleotide synthesis. This Shewanella halifaxensis (strain HAW-EB4) protein is Thymidine phosphorylase.